Consider the following 256-residue polypeptide: MAVGKNKRLSKGKKGLKKRVVDPFTRKEWFDIKAPTTFENRAVGKTLINKSTGLKNAADGLKGRVIEVNLADLQGSEDHAYRKVKLRVDEVQGKNLLTNFHGIDFTSDKLRSLVRKWQSLVEANVTVKTADDYYLRVFAIAFTKRQPNQVKKTTYAQSSKLREIRKKMMEIMQREVSNSTLAQLTQKLIPEVIGREIEKSTQTIFPLQNVHIRKVKLLKQPKFDLGNLMSLHGEGASEEKGKKVSSGFKDVVLESV.

Ala-2 is subject to N-acetylalanine; partial.

This sequence belongs to the eukaryotic ribosomal protein eS1 family. In terms of assembly, component of the small ribosomal subunit. Mature ribosomes consist of a small (40S) and a large (60S) subunit. The 40S subunit contains about 33 different proteins and 1 molecule of RNA (18S). The 60S subunit contains about 49 different proteins and 3 molecules of RNA (25S, 5.8S and 5S).

The protein localises to the cytoplasm. The chain is Small ribosomal subunit protein eS1 from Meyerozyma guilliermondii (strain ATCC 6260 / CBS 566 / DSM 6381 / JCM 1539 / NBRC 10279 / NRRL Y-324) (Yeast).